Reading from the N-terminus, the 463-residue chain is Exodeoxyribonuclease 7 large subunit (463 aa).

It belongs to the XseA family. In terms of assembly, heterooligomer composed of large and small subunits.

Its subcellular location is the cytoplasm. The enzyme catalyses Exonucleolytic cleavage in either 5'- to 3'- or 3'- to 5'-direction to yield nucleoside 5'-phosphates.. Bidirectionally degrades single-stranded DNA into large acid-insoluble oligonucleotides, which are then degraded further into small acid-soluble oligonucleotides. The sequence is that of Exodeoxyribonuclease 7 large subunit from Pseudomonas syringae pv. syringae (strain B728a).